The following is a 254-amino-acid chain: Coiled-coil domain-containing protein 152 (254 aa).

Positions 61-246 (SIKEECATLH…LEQRLSVGKD (186 aa)) form a coiled coil.

As to expression, detected in stomach.

This is Coiled-coil domain-containing protein 152 (CCDC152) from Homo sapiens (Human).